The following is a 619-amino-acid chain: Dihydroxy-acid dehydratase (619 aa).

A Mg(2+)-binding site is contributed by D81. C122 serves as a coordination point for [2Fe-2S] cluster. D123 and K124 together coordinate Mg(2+). K124 carries the N6-carboxylysine modification. C195 contributes to the [2Fe-2S] cluster binding site. E494 lines the Mg(2+) pocket. The active-site Proton acceptor is the S520.

It belongs to the IlvD/Edd family. As to quaternary structure, homodimer. Requires [2Fe-2S] cluster as cofactor. It depends on Mg(2+) as a cofactor.

It carries out the reaction (2R)-2,3-dihydroxy-3-methylbutanoate = 3-methyl-2-oxobutanoate + H2O. The enzyme catalyses (2R,3R)-2,3-dihydroxy-3-methylpentanoate = (S)-3-methyl-2-oxopentanoate + H2O. It functions in the pathway amino-acid biosynthesis; L-isoleucine biosynthesis; L-isoleucine from 2-oxobutanoate: step 3/4. Its pathway is amino-acid biosynthesis; L-valine biosynthesis; L-valine from pyruvate: step 3/4. Functionally, functions in the biosynthesis of branched-chain amino acids. Catalyzes the dehydration of (2R,3R)-2,3-dihydroxy-3-methylpentanoate (2,3-dihydroxy-3-methylvalerate) into 2-oxo-3-methylpentanoate (2-oxo-3-methylvalerate) and of (2R)-2,3-dihydroxy-3-methylbutanoate (2,3-dihydroxyisovalerate) into 2-oxo-3-methylbutanoate (2-oxoisovalerate), the penultimate precursor to L-isoleucine and L-valine, respectively. This chain is Dihydroxy-acid dehydratase, found in Shewanella frigidimarina (strain NCIMB 400).